The sequence spans 666 residues: Putative cysteine-rich receptor-like protein kinase 20 (666 aa).

The first 23 residues, 1–23 (MSSLICFIFLFLFSFITSFTASA), serve as a signal peptide directing secretion. Residues 24–264 (QNPFYLYHNC…PRPGKGGNSS (241 aa)) are Extracellular-facing. Gnk2-homologous domains lie at 27–131 (FYLY…NRNI) and 137–241 (TDGG…NYEF). N-linked (GlcNAc...) asparagine glycosylation is found at asparagine 32, asparagine 42, asparagine 60, asparagine 69, and asparagine 103. Asparagine 262 carries N-linked (GlcNAc...) asparagine glycosylation. A helical membrane pass occupies residues 265–285 (VIVIAVVVPITVLFLLFVAFF). The Cytoplasmic segment spans residues 286-666 (SVRRAKRKKT…EASITSVAPR (381 aa)). The 280-residue stretch at 344–623 (FLPINKLGQG…QMLTTSSIAL (280 aa)) folds into the Protein kinase domain. ATP-binding positions include 350–358 (LGQGGFGEV) and lysine 372. Tyrosine 417 bears the Phosphotyrosine mark. Residue aspartate 469 is the Proton acceptor of the active site. Threonine 509 bears the Phosphothreonine mark. Tyrosine 517 carries the post-translational modification Phosphotyrosine.

The protein belongs to the protein kinase superfamily. Ser/Thr protein kinase family. CRK subfamily.

It is found in the membrane. It carries out the reaction L-seryl-[protein] + ATP = O-phospho-L-seryl-[protein] + ADP + H(+). It catalyses the reaction L-threonyl-[protein] + ATP = O-phospho-L-threonyl-[protein] + ADP + H(+). The sequence is that of Putative cysteine-rich receptor-like protein kinase 20 (CRK20) from Arabidopsis thaliana (Mouse-ear cress).